Consider the following 200-residue polypeptide: Small ribosomal subunit protein eS1 (200 aa).

The protein belongs to the eukaryotic ribosomal protein eS1 family.

This is Small ribosomal subunit protein eS1 from Thermococcus gammatolerans (strain DSM 15229 / JCM 11827 / EJ3).